We begin with the raw amino-acid sequence, 615 residues long: uncharacterized protein (615 aa).

The Proton acceptor role is filled by D403. E406 serves as the catalytic Proton donor.

It belongs to the glycosyl hydrolase 15 family.

This is an uncharacterized protein from Methanocaldococcus jannaschii (strain ATCC 43067 / DSM 2661 / JAL-1 / JCM 10045 / NBRC 100440) (Methanococcus jannaschii).